A 263-amino-acid polypeptide reads, in one-letter code: Glucosamine-6-phosphate deaminase (263 aa).

The active-site Proton acceptor; for enolization step is the D72. D141 (for ring-opening step) is an active-site residue. The active-site Proton acceptor; for ring-opening step is the H143. E148 (for ring-opening step) is an active-site residue.

The protein belongs to the glucosamine/galactosamine-6-phosphate isomerase family. NagB subfamily.

It catalyses the reaction alpha-D-glucosamine 6-phosphate + H2O = beta-D-fructose 6-phosphate + NH4(+). The protein operates within amino-sugar metabolism; N-acetylneuraminate degradation; D-fructose 6-phosphate from N-acetylneuraminate: step 5/5. Allosterically activated by N-acetylglucosamine 6-phosphate (GlcNAc6P). In terms of biological role, catalyzes the reversible isomerization-deamination of glucosamine 6-phosphate (GlcN6P) to form fructose 6-phosphate (Fru6P) and ammonium ion. The sequence is that of Glucosamine-6-phosphate deaminase from Porphyromonas gingivalis (strain ATCC BAA-308 / W83).